The sequence spans 60 residues: UPF0337 protein SACOL1680 (60 aa).

This sequence belongs to the UPF0337 (CsbD) family.

The polypeptide is UPF0337 protein SACOL1680 (Staphylococcus aureus (strain COL)).